The sequence spans 446 residues: MSSKQQAQGRNVVVIGTQWGDEGKGKVVDWLTDHAQAVVRFQGGHNAGHTLIIGDKKTILRLIPSGIMHKDVICYIGNGVVLSPEALFKEIGELEAAGLDVQSRLKISEATTLILPYHVAIDHAREKKRGEAKIGTTGRGIGPAYEDKVARRALRVQDLFYPEKFAEQLRENLEYHNFMLTNYYGAEPVNYEKTLAEAMSYAERLKPMVVDVSSALYAAEQAGQNLLFEGAQGTLLDIDHGTYPYVTSSNCVAGNAAAGSGVGPDSLQYILGITKAYCTRVGAGPFPSELYDHDNPARQDPIGVRLAEVGKEFGSVTGRPRRTGWLDAAALKRSIQINGLSGLCITKLDVLDGLETIRLCVGYNLDGKKLDVLPRGAESVARCEPIYEDFPGWKGTTFGIREWEKLPVEAQNFLRRIEEVAGKPIAMVSTGPERDETILLQHPFQD.

Residues 20–26 and 48–50 contribute to the GTP site; these read GDEGKGK and GHT. Asp21 functions as the Proton acceptor in the catalytic mechanism. Mg(2+) is bound by residues Asp21 and Gly48. Residues 21–24, 46–49, Thr137, Arg151, Gln232, Thr247, and Arg319 contribute to the IMP site; these read DEGK and NAGH. His49 (proton donor) is an active-site residue. Substrate is bound at residue 315 to 321; it reads SVTGRPR. GTP is bound by residues Arg321, 347-349, and 429-431; these read KLD and STG.

The protein belongs to the adenylosuccinate synthetase family. In terms of assembly, homodimer. Requires Mg(2+) as cofactor.

It localises to the cytoplasm. The catalysed reaction is IMP + L-aspartate + GTP = N(6)-(1,2-dicarboxyethyl)-AMP + GDP + phosphate + 2 H(+). It participates in purine metabolism; AMP biosynthesis via de novo pathway; AMP from IMP: step 1/2. Functionally, plays an important role in the de novo pathway of purine nucleotide biosynthesis. Catalyzes the first committed step in the biosynthesis of AMP from IMP. This is Adenylosuccinate synthetase from Polynucleobacter asymbioticus (strain DSM 18221 / CIP 109841 / QLW-P1DMWA-1) (Polynucleobacter necessarius subsp. asymbioticus).